The primary structure comprises 413 residues: MKIYLVGGAVRDALLGLPVKDKDWVVVGATPEEMLNAGYQQVGRDFPVFLHPKTREEYALARTERKAGLGYTGFTCYAAPDVTLEQDLLRRDLTINALAQDDEGHIIDAYGGKRDLQNRLLRHVSPAFSEDPLRVLRVARFAARYAHLSFRIADETLALMTAMTAAGELEHLTPERVWKETENALTTRNPQVFFQVLRDCGALKVLFPEIDALFGVPAPAKWHPEIDTGIHTLMTLSMAAMLSPEVDVRFATLCHDLGKGLTPKEFWPRHHGHGPAGVKLVEGICQRLRVPNDIRDLAKLVAEFHDLIHTFPILKPATIVKLFDNIDAWRKPQRVEQIALTSEADVRGRTGFEACDYSQGRLLREAWEIAKAVPTKDVVEAGFKGPEIREELTKRRVQAVADWKEKRCPQPKD.

ATP-binding residues include glycine 8 and arginine 11. CTP contacts are provided by glycine 8 and arginine 11. Positions 21 and 23 each coordinate Mg(2+). Arginine 91, arginine 137, and arginine 140 together coordinate ATP. CTP contacts are provided by arginine 91, arginine 137, and arginine 140. The HD domain maps to threonine 228–tryptophan 329.

This sequence belongs to the tRNA nucleotidyltransferase/poly(A) polymerase family. Bacterial CCA-adding enzyme type 1 subfamily. As to quaternary structure, monomer. Can also form homodimers and oligomers. Mg(2+) serves as cofactor. Requires Ni(2+) as cofactor.

It catalyses the reaction a tRNA precursor + 2 CTP + ATP = a tRNA with a 3' CCA end + 3 diphosphate. The catalysed reaction is a tRNA with a 3' CCA end + 2 CTP + ATP = a tRNA with a 3' CCACCA end + 3 diphosphate. Functionally, catalyzes the addition and repair of the essential 3'-terminal CCA sequence in tRNAs without using a nucleic acid template. Adds these three nucleotides in the order of C, C, and A to the tRNA nucleotide-73, using CTP and ATP as substrates and producing inorganic pyrophosphate. tRNA 3'-terminal CCA addition is required both for tRNA processing and repair. Also involved in tRNA surveillance by mediating tandem CCA addition to generate a CCACCA at the 3' terminus of unstable tRNAs. While stable tRNAs receive only 3'-terminal CCA, unstable tRNAs are marked with CCACCA and rapidly degraded. This Enterobacter sp. (strain 638) protein is Multifunctional CCA protein.